A 153-amino-acid chain; its full sequence is MKCPFCGKENTRVIDSRPADDCSSIRRRRQCDECSKRFTTYEKVETIPLVVIKKDNNREPYDRSKIEAGVFRSCHKRPISVDQINALVDEVENTIFNLEEKEVPSNKIGEIVMDKLKSLDAVAYVRFASVYREFKDVNTFMNELKKILDHEHV.

Residues Cys3 to Cys34 fold into a zinc finger. Residues Leu49–Thr139 enclose the ATP-cone domain.

This sequence belongs to the NrdR family. Zn(2+) is required as a cofactor.

Its function is as follows. Negatively regulates transcription of bacterial ribonucleotide reductase nrd genes and operons by binding to NrdR-boxes. The protein is Transcriptional repressor NrdR of Lachnoclostridium phytofermentans (strain ATCC 700394 / DSM 18823 / ISDg) (Clostridium phytofermentans).